A 111-amino-acid polypeptide reads, in one-letter code: Toxin 3FTx-Tel4 (111 aa).

The signal sequence occupies residues 1-19 (MKTLLLALVVVAFMCLGSA). The propeptide occupies 20–34 (DQLGLGSQRIDWEQG). Glutamine 35 carries the post-translational modification Pyrrolidone carboxylic acid. Cystine bridges form between cysteine 44/cysteine 68, cysteine 47/cysteine 55, cysteine 61/cysteine 87, cysteine 91/cysteine 102, and cysteine 103/cysteine 108.

It belongs to the three-finger toxin family. Ancestral subfamily. Boigatoxin sub-subfamily. As to expression, expressed by the venom gland.

Its subcellular location is the secreted. Functionally, potent postsynaptic neurotoxin. Displays readily reversible competitive antagonism at the nicotinic acetylcholine receptor (nAChR). In Telescopus dhara (Egyptian catsnake), this protein is Toxin 3FTx-Tel4.